The following is a 248-amino-acid chain: Transcription factor Spi-C (248 aa).

A DNA-binding region (ETS) is located at residues 111 to 194; the sequence is LRLFEYLHES…IRRKLTYQFS (84 aa).

Belongs to the ETS family. Binds DNA as a monomer.

The protein resides in the nucleus. Its function is as follows. Controls the development of red pulp macrophages required for red blood cells recycling and iron homeostasis. Transcription factor that binds to the PU-box, a purine-rich DNA sequence (5'-GAGGA[AT]-3') that can act as a lymphoid-specific enhancer. Regulates VCAM1 gene expression. This chain is Transcription factor Spi-C (SPIC), found in Bos taurus (Bovine).